The following is a 793-amino-acid chain: Short transient receptor potential channel 1 (793 aa).

The tract at residues 1–30 (MMAALYPSTDLSGASSSSLPSSPSSSSPNE) is disordered. Over 1–345 (MMAALYPSTD…FGQMSGYRRK (345 aa)) the chain is Cytoplasmic. The segment covering 15 to 28 (SSSSLPSSPSSSSP) has biased composition (low complexity). ANK repeat units lie at residues 46–75 (LNEKLFLLACDKGDYYMVKEILEENSSGDL), 83–109 (LGRNAVTITIENENLDILQLLLDYGCQ), 111–156 (ADAL…EYST), and 158–180 (MDVAPVILAAHRNNYEILTMLLK). Positions 189, 193, 195, and 198 each coordinate Zn(2+). An intramembrane region (discontinuously helical) is located at residues 346–379 (PTCKKIMTVLTVGIFWPVLSLCYLIAPKSQFGRI). The Cytoplasmic portion of the chain corresponds to 380 to 386 (IHTPFMK). Residues 387–404 (FIIHGASYFTFLLLLNLY) traverse the membrane as a helical segment. Topologically, residues 405-422 (SLVYHEDKKNTMGPALER) are extracellular. Residues 423 to 439 (IDYLLILWIIGMIWSDI) traverse the membrane as a helical segment. Residues 440 to 455 (KRLWYEGLEDFLEESR) are Cytoplasmic-facing. A helical membrane pass occupies residues 456-475 (NQLSFVMNSLYLATFALKEE). At 476 to 496 (AHNKFHDFADRKDWDAFHPTL) the chain is on the extracellular side. The helical transmembrane segment at 497-517 (VAEGLFAFANVLSYLRLFFYV) threads the bilayer. Residues 518–536 (YTSSILGPLQISMGRMLQD) are Cytoplasmic-facing. The helical transmembrane segment at 537 to 558 (FGKFLGMFLLVLFSFTIGLTQL) threads the bilayer. Over 559 to 623 (YDKGYTPKEQ…GEELQSFVGA (65 aa)) the chain is Extracellular. An intrachain disulfide couples Cys-571 to Cys-576. Residues 624-644 (FIVGTYNVVVVIVLTKLLVAM) form a helical membrane-spanning segment. Over 645–793 (LHKSFQLIAN…SKYAMFYPRN (149 aa)) the chain is Cytoplasmic.

This sequence belongs to the transient receptor (TC 1.A.4) family. STrpC subfamily. TRPC1 sub-subfamily. As to quaternary structure, heterotetramer with TRPC4 and/or TRPC5. Forms a heteromeric ion channel with TRPC4, with a 1:3 TRPC1:TRPC4 stoichiometry. Unlike other TRP channel proteins, does not form a homomeric channel. Interacts with TRPC4AP. Interacts with ITPR3. Interacts with MX1 and RNF24. Interacts with FKBP4. Interacts with PLSCR1. Interacts with PKD2L2. Forms a heterotetramer with PKD2 with a 2:2 stoichiometry; has distinct channel properties separate from PKD2 or TRPC1 homomers alone. Post-translationally, activation of PRKCA induces phosphorylation of TRPC1 and subsequent Ca2+ entry into cells.

The protein resides in the cell membrane. The enzyme catalyses Ca(2+)(in) = Ca(2+)(out). It carries out the reaction Na(+)(in) = Na(+)(out). The catalysed reaction is Li(+)(in) = Li(+)(out). It catalyses the reaction Cs(+)(in) = Cs(+)(out). With respect to regulation, may be operated by a phosphatidylinositol second messenger system activated by receptor tyrosine kinases or G-protein coupled receptors. Also activated by intracellular calcium store depletion. Functionally, forms a receptor-activated non-selective calcium permeant cation channel. Forms a heteromeric ion channel with TRPC4 or TRPC5 that has reduced calcium permeability compared to the homomeric TRPC4 or TRPC5 channel. Also permeable to monovalent ions including sodium, lithium and cesium ions. The polypeptide is Short transient receptor potential channel 1 (TRPC1) (Bos taurus (Bovine)).